The following is a 122-amino-acid chain: Large ribosomal subunit protein uL14c (122 aa).

It belongs to the universal ribosomal protein uL14 family. In terms of assembly, part of the 50S ribosomal subunit.

Its subcellular location is the plastid. In terms of biological role, binds to 23S rRNA. In Cuscuta reflexa (Southern Asian dodder), this protein is Large ribosomal subunit protein uL14c.